The primary structure comprises 302 residues: Probable 2-(5''-triphosphoribosyl)-3'-dephosphocoenzyme-A synthase (302 aa).

It belongs to the CitG/MdcB family.

The catalysed reaction is 3'-dephospho-CoA + ATP = 2'-(5''-triphospho-alpha-D-ribosyl)-3'-dephospho-CoA + adenine. The chain is Probable 2-(5''-triphosphoribosyl)-3'-dephosphocoenzyme-A synthase from Albidiferax ferrireducens (strain ATCC BAA-621 / DSM 15236 / T118) (Rhodoferax ferrireducens).